A 295-amino-acid chain; its full sequence is Deoxyuridine 5'-triphosphate nucleotidohydrolase (295 aa).

178 to 180 (RSG) serves as a coordination point for substrate. The span at 260-272 (NSVRKHTHEDNPV) shows a compositional bias: basic and acidic residues. Positions 260–295 (NSVRKHTHEDNPVHEPNVATASADIRGTKGLGSSGF) are disordered.

It belongs to the dUTPase family. Mg(2+) serves as cofactor.

It carries out the reaction dUTP + H2O = dUMP + diphosphate + H(+). Its function is as follows. Involved in nucleotide metabolism: produces dUMP, the immediate precursor of thymidine nucleotides and decreases the intracellular concentration of dUTP to avoid uracil incorporation into viral DNA. This chain is Deoxyuridine 5'-triphosphate nucleotidohydrolase, found in Human herpesvirus 8 type P (isolate GK18) (HHV-8).